A 199-amino-acid polypeptide reads, in one-letter code: uncharacterized protein (199 aa).

It to M.jannaschii MJ1356.

This is an uncharacterized protein from Methanocaldococcus jannaschii (strain ATCC 43067 / DSM 2661 / JAL-1 / JCM 10045 / NBRC 100440) (Methanococcus jannaschii).